The primary structure comprises 61 residues: MAKKALILKAAAKPKFSVRAYTRCQRCGRPKAVYRKFGLCRVCIREMAHRGELPGVSKASW.

4 residues coordinate Zn(2+): C24, C27, C40, and C43.

The protein belongs to the universal ribosomal protein uS14 family. Zinc-binding uS14 subfamily. Part of the 30S ribosomal subunit. Contacts proteins S3 and S10. Zn(2+) is required as a cofactor.

Binds 16S rRNA, required for the assembly of 30S particles and may also be responsible for determining the conformation of the 16S rRNA at the A site. This is Small ribosomal subunit protein uS14B from Salinispora arenicola (strain CNS-205).